The chain runs to 262 residues: Short-chain Z-isoprenyl diphosphate synthase (262 aa).

The active site involves Asp-40. Asp-40 serves as a coordination point for Mg(2+). Substrate contacts are provided by residues Gly-41–Arg-44, Trp-45, and Ser-86–Glu-88. Catalysis depends on Asn-89, which acts as the Proton acceptor. Substrate is bound by residues Arg-92, Arg-211, and Arg-217 to Ser-219. Glu-230 contributes to the Mg(2+) binding site.

The protein belongs to the UPP synthase family. Z-FPP synthase subfamily. Requires Mg(2+) as cofactor.

The enzyme catalyses isopentenyl diphosphate + (2E)-geranyl diphosphate = (2Z,6E)-farnesyl diphosphate + diphosphate. The protein operates within phospholipid metabolism; decaprenyl phosphate biosynthesis. Its function is as follows. Generates Z-farnesyl diphosphate (Z-FPP) from isopentenyl pyrophosphate (IPP). Z-FPP is the precursor of decaprenyl diphosphate, which has a central role in the biosynthesis of the mycobacterial cell wall. In Mycobacterium leprae (strain TN), this protein is Short-chain Z-isoprenyl diphosphate synthase.